Reading from the N-terminus, the 206-residue chain is Uridine kinase (206 aa).

9–16 (GGSGSGKT) contacts ATP.

This sequence belongs to the uridine kinase family.

The protein resides in the cytoplasm. It catalyses the reaction uridine + ATP = UMP + ADP + H(+). It carries out the reaction cytidine + ATP = CMP + ADP + H(+). The protein operates within pyrimidine metabolism; CTP biosynthesis via salvage pathway; CTP from cytidine: step 1/3. It participates in pyrimidine metabolism; UMP biosynthesis via salvage pathway; UMP from uridine: step 1/1. This Borrelia hermsii (strain HS1 / DAH) protein is Uridine kinase.